Reading from the N-terminus, the 229-residue chain is Adenine nucleotide translocase lysine N-methyltransferase (229 aa).

The segment at 1–22 (MDQDDPAEALTELREKRLGLLE) is N-terminal sequence (NTS). A helical membrane pass occupies residues 20 to 42 (LLEIVQAAAGSGLAVYTIWALLL). The methyltransferase (MTase) stretch occupies residues 43–77 (QPGFRRVPLRLQVPYVGASARQVENVLSLLRGRPG). Residues 43 to 77 (QPGFRRVPLRLQVPYVGASARQVENVLSLLRGRPG) are pre-methyltransferase (preMT).

Belongs to the ANT/ATPSC lysine N-methyltransferase family.

It is found in the mitochondrion membrane. It carries out the reaction L-lysyl-[protein] + 3 S-adenosyl-L-methionine = N(6),N(6),N(6)-trimethyl-L-lysyl-[protein] + 3 S-adenosyl-L-homocysteine + 3 H(+). Its function is as follows. Mitochondrial protein-lysine N-methyltransferase that trimethylates adenine nucleotide translocases ANT2/SLC25A5 and ANT3/SLC25A6, thereby regulating mitochondrial respiration. Probably also trimethylates ANT1/SLC25A4. This chain is Adenine nucleotide translocase lysine N-methyltransferase, found in Mus musculus (Mouse).